The primary structure comprises 829 residues: Transcription activator GutR (829 aa).

The segment at residues 42–61 is a DNA-binding region (H-T-H motif); it reads IDKIALQLGVSPNTIKSWIG. 200 to 207 is an ATP binding site; it reads GWAGMGKT. TPR repeat units lie at residues 697–730, 736–769, and 775–808; these read HRVL…SSTY, IEAY…KHNA, and IYYH…IDSW.

Functionally, activator of the glucitol dehydrogenase gene (gutB). The protein is Transcription activator GutR (gutR) of Bacillus subtilis (strain 168).